We begin with the raw amino-acid sequence, 195 residues long: Glycerol-3-phosphate acyltransferase (195 aa).

Transmembrane regions (helical) follow at residues 2–22, 54–74, 80–100, 107–127, 132–152, and 155–175; these read IFFSILITIFAYFLGSISSAI, IAISVILFDILKGAIPMWLGY, PIFLGATAVFSCLGHMYPIFF, GVATAFGVLTTIDLHLSIVMI, LTVLSFGYSSLGAIVTAFIIP, and AWHFQSQYLLPTIIISSLVVI.

This sequence belongs to the PlsY family. Probably interacts with PlsX.

It localises to the cell inner membrane. It carries out the reaction an acyl phosphate + sn-glycerol 3-phosphate = a 1-acyl-sn-glycero-3-phosphate + phosphate. Its pathway is lipid metabolism; phospholipid metabolism. Functionally, catalyzes the transfer of an acyl group from acyl-phosphate (acyl-PO(4)) to glycerol-3-phosphate (G3P) to form lysophosphatidic acid (LPA). This enzyme utilizes acyl-phosphate as fatty acyl donor, but not acyl-CoA or acyl-ACP. This Blochmanniella pennsylvanica (strain BPEN) protein is Glycerol-3-phosphate acyltransferase.